Reading from the N-terminus, the 295-residue chain is Phosphoenolpyruvate phosphomutase (295 aa).

The Nucleophile role is filled by D58. D58 provides a ligand contact to Mg(2+).

The protein belongs to the isocitrate lyase/PEP mutase superfamily. PEP mutase family. As to quaternary structure, homotetramer. It depends on Mg(2+) as a cofactor.

The enzyme catalyses phosphoenolpyruvate + H(+) = 3-phosphonopyruvate. It functions in the pathway phosphorus metabolism; phosphonate biosynthesis. Formation of a carbon-phosphorus bond by converting phosphoenolpyruvate (PEP) to phosphonopyruvate (P-Pyr). This Mytilus edulis (Blue mussel) protein is Phosphoenolpyruvate phosphomutase.